Consider the following 770-residue polypeptide: Formate acetyltransferase (770 aa).

The region spanning 5-635 (NEMQKLAWAG…KTGNTPDGRR (631 aa)) is the PFL domain. Catalysis depends on cysteine 419, which acts as the S-acetylcysteine intermediate. Cysteine 420 functions as the Cysteine radical intermediate in the catalytic mechanism. Residues 642–770 (PGANPMHGRD…VITRTFTESM (129 aa)) form the Glycine radical domain. Glycine 745 bears the Glycine radical mark.

It belongs to the glycyl radical enzyme (GRE) family. PFL subfamily. Homodimer.

Its subcellular location is the cytoplasm. It carries out the reaction formate + acetyl-CoA = pyruvate + CoA. It participates in fermentation; pyruvate fermentation; formate from pyruvate: step 1/1. Functionally, catalyzes the conversion of pyruvate to formate and acetyl-CoA. This Haemophilus influenzae (strain ATCC 51907 / DSM 11121 / KW20 / Rd) protein is Formate acetyltransferase (pflB).